Reading from the N-terminus, the 159-residue chain is uncharacterized protein (159 aa).

The next 4 membrane-spanning stretches (helical) occupy residues 5 to 27, 34 to 51, 61 to 83, and 103 to 125; these read TLDL…RGFV, ASIL…KRLV, SILL…MLFL, and FGFF…LLHV.

The protein resides in the cell membrane. This is an uncharacterized protein from Treponema pallidum (strain Nichols).